Reading from the N-terminus, the 673-residue chain is Metal-nicotianamine transporter YSL1 (673 aa).

Residues 1–13 are compositionally biased toward basic and acidic residues; the sequence is MEIEQRRIMKREG. The tract at residues 1–39 is disordered; that stretch reads MEIEQRRIMKREGEEEEDNNQLSLQEEEPDTEEEMSGRT. Residues 14–34 show a composition bias toward acidic residues; it reads EEEEDNNQLSLQEEEPDTEEE. 16 helical membrane-spanning segments follow: residues 46 to 66, 71 to 91, 119 to 139, 163 to 183, 225 to 245, 260 to 280, 283 to 303, 328 to 348, 392 to 412, 420 to 440, 442 to 462, 467 to 487, 510 to 530, 558 to 578, 604 to 624, and 642 to 662; these read QITV…SVIA, LTTG…FVFV, SAVA…LLGL, GLGW…FVLI, FMKY…FSGI, AWKQ…GMIC, LVNL…WPLL, VFLS…KILF, FAVS…PLIF, VIVA…GAGL, DINM…AVTG, VVAG…SCIL, IGTV…YKAF, FSAL…FAVL, FLVG…VFVW, and GLIC…LAGV.

The protein belongs to the YSL (TC 2.A.67.2) family. As to expression, low levels of expression in leaves and shoots, but not detected in roots. Restricted to the vasculature, in the xylem parenchyma surrounding xylem tubes. Expressed in pollen grains, in the vasculature of petals and sepals, in the carpel veins, in the style underneath the stigmatic papillae, in the vascular tissue of the funiculus and in the chalazal endosperm.

The protein localises to the membrane. Functionally, involved in iron loading of the seeds. Acts probably as a transporter of iron- and metal-nicotianamine chelates. This chain is Metal-nicotianamine transporter YSL1 (YSL1), found in Arabidopsis thaliana (Mouse-ear cress).